Consider the following 1157-residue polypeptide: DNA-directed RNA polymerase subunit beta (1157 aa).

This sequence belongs to the RNA polymerase beta chain family. The RNAP catalytic core consists of 2 alpha, 1 beta, 1 beta' and 1 omega subunit. When a sigma factor is associated with the core the holoenzyme is formed, which can initiate transcription.

It catalyses the reaction RNA(n) + a ribonucleoside 5'-triphosphate = RNA(n+1) + diphosphate. Its function is as follows. DNA-dependent RNA polymerase catalyzes the transcription of DNA into RNA using the four ribonucleoside triphosphates as substrates. The protein is DNA-directed RNA polymerase subunit beta of Tropheryma whipplei (strain TW08/27) (Whipple's bacillus).